Reading from the N-terminus, the 219-residue chain is 7-carboxy-7-deazaguanine synthase (219 aa).

Substrate contacts are provided by residues 12–14 (IQG) and R27. Positions 18–219 (YTGTPSIFIR…VQIHKYLKIR (202 aa)) constitute a Radical SAM core domain. The [4Fe-4S] cluster site is built by C31, C35, and C38. T40 contributes to the Mg(2+) binding site. A substrate-binding site is contributed by T92. S-adenosyl-L-methionine is bound by residues G94 and 136 to 138 (SPK).

The protein belongs to the radical SAM superfamily. 7-carboxy-7-deazaguanine synthase family. Homodimer. [4Fe-4S] cluster serves as cofactor. Requires S-adenosyl-L-methionine as cofactor. The cofactor is Mg(2+).

The catalysed reaction is 6-carboxy-5,6,7,8-tetrahydropterin + H(+) = 7-carboxy-7-deazaguanine + NH4(+). The protein operates within purine metabolism; 7-cyano-7-deazaguanine biosynthesis. Catalyzes the complex heterocyclic radical-mediated conversion of 6-carboxy-5,6,7,8-tetrahydropterin (CPH4) to 7-carboxy-7-deazaguanine (CDG), a step common to the biosynthetic pathways of all 7-deazapurine-containing compounds. This is 7-carboxy-7-deazaguanine synthase from Buchnera aphidicola subsp. Schizaphis graminum (strain Sg).